A 393-amino-acid polypeptide reads, in one-letter code: NAD(P)H-quinone oxidoreductase subunit H, chloroplastic (393 aa).

This sequence belongs to the complex I 49 kDa subunit family. In terms of assembly, NDH is composed of at least 16 different subunits, 5 of which are encoded in the nucleus.

Its subcellular location is the plastid. It localises to the chloroplast thylakoid membrane. The catalysed reaction is a plastoquinone + NADH + (n+1) H(+)(in) = a plastoquinol + NAD(+) + n H(+)(out). It catalyses the reaction a plastoquinone + NADPH + (n+1) H(+)(in) = a plastoquinol + NADP(+) + n H(+)(out). NDH shuttles electrons from NAD(P)H:plastoquinone, via FMN and iron-sulfur (Fe-S) centers, to quinones in the photosynthetic chain and possibly in a chloroplast respiratory chain. The immediate electron acceptor for the enzyme in this species is believed to be plastoquinone. Couples the redox reaction to proton translocation, and thus conserves the redox energy in a proton gradient. The sequence is that of NAD(P)H-quinone oxidoreductase subunit H, chloroplastic from Arabis hirsuta (Hairy rock-cress).